Reading from the N-terminus, the 352-residue chain is Biotin synthase (352 aa).

The Radical SAM core domain occupies 44–262; it reads NRVQVSTLLS…LAVARILMPK (219 aa). [4Fe-4S] cluster-binding residues include C59, C63, and C66. Residues C103, C134, C194, and R266 each contribute to the [2Fe-2S] cluster site.

Belongs to the radical SAM superfamily. Biotin synthase family. In terms of assembly, homodimer. The cofactor is [4Fe-4S] cluster. It depends on [2Fe-2S] cluster as a cofactor.

It carries out the reaction (4R,5S)-dethiobiotin + (sulfur carrier)-SH + 2 reduced [2Fe-2S]-[ferredoxin] + 2 S-adenosyl-L-methionine = (sulfur carrier)-H + biotin + 2 5'-deoxyadenosine + 2 L-methionine + 2 oxidized [2Fe-2S]-[ferredoxin]. It participates in cofactor biosynthesis; biotin biosynthesis; biotin from 7,8-diaminononanoate: step 2/2. Its function is as follows. Catalyzes the conversion of dethiobiotin (DTB) to biotin by the insertion of a sulfur atom into dethiobiotin via a radical-based mechanism. This chain is Biotin synthase, found in Pseudomonas putida (strain ATCC 47054 / DSM 6125 / CFBP 8728 / NCIMB 11950 / KT2440).